The sequence spans 89 residues: Small ribosomal subunit protein uS19 (89 aa).

It belongs to the universal ribosomal protein uS19 family.

In terms of biological role, protein S19 forms a complex with S13 that binds strongly to the 16S ribosomal RNA. This Xanthomonas axonopodis pv. citri (strain 306) protein is Small ribosomal subunit protein uS19.